Here is a 156-residue protein sequence, read N- to C-terminus: Arginine repressor (156 aa).

This sequence belongs to the ArgR family.

It is found in the cytoplasm. The protein operates within amino-acid biosynthesis; L-arginine biosynthesis [regulation]. Regulates arginine biosynthesis genes. This is Arginine repressor from Vibrio campbellii (strain ATCC BAA-1116).